Reading from the N-terminus, the 317-residue chain is Acetyl-coenzyme A carboxylase carboxyl transferase subunit alpha (317 aa).

A CoA carboxyltransferase C-terminal domain is found at 40-293; it reads LEKRSADALK…GDIITASLRS (254 aa).

Belongs to the AccA family. Acetyl-CoA carboxylase is a heterohexamer composed of biotin carboxyl carrier protein (AccB), biotin carboxylase (AccC) and two subunits each of ACCase subunit alpha (AccA) and ACCase subunit beta (AccD).

The protein localises to the cytoplasm. It catalyses the reaction N(6)-carboxybiotinyl-L-lysyl-[protein] + acetyl-CoA = N(6)-biotinyl-L-lysyl-[protein] + malonyl-CoA. The protein operates within lipid metabolism; malonyl-CoA biosynthesis; malonyl-CoA from acetyl-CoA: step 1/1. Its function is as follows. Component of the acetyl coenzyme A carboxylase (ACC) complex. First, biotin carboxylase catalyzes the carboxylation of biotin on its carrier protein (BCCP) and then the CO(2) group is transferred by the carboxyltransferase to acetyl-CoA to form malonyl-CoA. This Brucella anthropi (strain ATCC 49188 / DSM 6882 / CCUG 24695 / JCM 21032 / LMG 3331 / NBRC 15819 / NCTC 12168 / Alc 37) (Ochrobactrum anthropi) protein is Acetyl-coenzyme A carboxylase carboxyl transferase subunit alpha.